A 199-amino-acid chain; its full sequence is Adenosylcobinamide-GDP ribazoletransferase (199 aa).

The next 2 membrane-spanning stretches (helical) occupy residues 2–22 (LAGGVPHGTVAFAYLAVVFAV) and 61–81 (IAAVVVVVAGLVTGSLGVAAL).

The protein belongs to the CobS family. Mg(2+) is required as a cofactor.

It localises to the cell membrane. The catalysed reaction is alpha-ribazole + adenosylcob(III)inamide-GDP = adenosylcob(III)alamin + GMP + H(+). It catalyses the reaction alpha-ribazole 5'-phosphate + adenosylcob(III)inamide-GDP = adenosylcob(III)alamin 5'-phosphate + GMP + H(+). It functions in the pathway cofactor biosynthesis; adenosylcobalamin biosynthesis; adenosylcobalamin from cob(II)yrinate a,c-diamide: step 7/7. Functionally, joins adenosylcobinamide-GDP and alpha-ribazole to generate adenosylcobalamin (Ado-cobalamin). Also synthesizes adenosylcobalamin 5'-phosphate from adenosylcobinamide-GDP and alpha-ribazole 5'-phosphate. This is Adenosylcobinamide-GDP ribazoletransferase from Halobacterium salinarum (strain ATCC 700922 / JCM 11081 / NRC-1) (Halobacterium halobium).